Here is a 240-residue protein sequence, read N- to C-terminus: Demethylmenaquinone methyltransferase (240 aa).

S-adenosyl-L-methionine contacts are provided by residues T62, D80, 102–103 (DA), and S119.

Belongs to the class I-like SAM-binding methyltransferase superfamily. MenG/UbiE family.

The enzyme catalyses a 2-demethylmenaquinol + S-adenosyl-L-methionine = a menaquinol + S-adenosyl-L-homocysteine + H(+). Its pathway is quinol/quinone metabolism; menaquinone biosynthesis; menaquinol from 1,4-dihydroxy-2-naphthoate: step 2/2. In terms of biological role, methyltransferase required for the conversion of demethylmenaquinol (DMKH2) to menaquinol (MKH2). This is Demethylmenaquinone methyltransferase from Beutenbergia cavernae (strain ATCC BAA-8 / DSM 12333 / CCUG 43141 / JCM 11478 / NBRC 16432 / NCIMB 13614 / HKI 0122).